Reading from the N-terminus, the 65-residue chain is Large ribosomal subunit protein bL35 (65 aa).

Positions Met1–Thr21 are disordered.

This sequence belongs to the bacterial ribosomal protein bL35 family.

In Nitrosospira multiformis (strain ATCC 25196 / NCIMB 11849 / C 71), this protein is Large ribosomal subunit protein bL35.